We begin with the raw amino-acid sequence, 504 residues long: Pyrichalasin C-7 hydroxylase (504 aa).

Positions 1–17 (MLNSAACIVLAITAVLG) are cleaved as a signal peptide. Cysteine 449 provides a ligand contact to heme.

It belongs to the cytochrome P450 family. Heme serves as cofactor.

The protein operates within mycotoxin biosynthesis. Functionally, cytochrome P450 monooxygenase; part of the gene cluster that mediates the biosynthesis of the mycotoxin pyrichalasin H, a tyrosine-derived cytochalasan that inhibits the growth of rice seedlings, but also inhibits lymphocyte capping and actin polymerization and alters cell morphology. Pyrichalasin H is indicated as the responsible agent for the genus-specific pathogenicity of M.grisea toward crabgrass. The first step in the pathway is catalyzed by the O-methyltransferase pyiA which methylates free tyrosine to generate the precursor O-methyltyrosine. The hybrid PKS-NRPS pyiS, assisted by the enoyl reductase pyiC, are responsible for fusion of the O-methyltyrosine precursor and the polyketide backbone. The polyketide synthase module (PKS) of pyiS is responsible for the synthesis of the polyketide backbone and the downstream nonribosomal peptide synthetase (NRPS) amidates the carboxyl end of the polyketide with the O-methyltyrosine precursor. As the NRPS A-domain demonstrates substrate tolerance, pyiS can also use phenylalanine, tyrosine and even para-chlorophenylalanine as amino acid precursor, which leads to the production of novel cytochalasans, including halogenated cytochalasans. Because pyiS lacks a designated enoylreductase (ER) domain, the required activity is provided the enoyl reductase pyiC. Reduction by the hydrolyase pyiE leads to 1,5-dihydropyrrolone, which is substrate for dehydration and intra-molecular Diels-Alder cyclization by the Diels-Alderase pyiF to yield the required isoindolone-fused macrocycle. The tailoring cytochrome P450 monooxygenases piyD and piyG catalyze the hydroxylation at C-18 and C-7, respectivily, whereas the short-chain dehydrogenase/reductase pyiH reduces the carbonyl at C-21 in preparation for the transfer of an acetyl group by the acetyltransferase pyiB. These 3 reactions whose order is not clear yet, lead to the production of O-methylpyrichalasin J, a deacetylated pyrichalasin H. Finally, pyiB to converts O-methylpyrichalasin J into the final product pyrichalasin H via acetylation of C-21. This is Pyrichalasin C-7 hydroxylase from Pyricularia grisea (Crabgrass-specific blast fungus).